The chain runs to 580 residues: FAD-dependent monooxygenase yanF (580 aa).

A disordered region spans residues 1–21 (MSSSAECRPIGWGGWGPDPNT). Positions 150–322 (CRLNASCIVT…VEYDLTTNTG (173 aa)) constitute an FAD-binding PCMH-type domain. Position 187 is a pros-8alpha-FAD histidine (His-187).

The protein belongs to the oxygen-dependent FAD-linked oxidoreductase family.

Its pathway is secondary metabolite biosynthesis; terpenoid biosynthesis. Functionally, FAD-dependent monooxygenase; part of the gene cluster that mediates the biosynthesis of yanuthone D, a fungal isoprenoid epoxycyclohexenone that acts as an antibiotic against fungi and bacteria. The first step of the pathway is the synthesis of 6-methylsalicylic acid (6-MSA) by the polyketide synthase yanA. 6-MSA is then converted to m-cresol by the decarboxylase yanB. The cytochrome P450 monooxygenase yanC then catalyzes the oxidation of m-cresol to toluquinol. Epoxidation of toluquinol is then performed by the short chain dehydrogenase yanD, with the help of yanE, and a further prenylated by yanG leads to 7-deacetoxyyanuthone A. The next step is the hydroxylation of C-22 of 7-deacetoxyyanuthone A by the cytochrome P450 monooxygenase yanH to yield 22-deacetylyanuthone A. O-Mevalon transferase yanI then attaches mevalon to the hydroxyl group of 22-deacetylyanuthone A to produce yanuthone E. Finally, the FAD-dependent monooxygenase yanF oxidizes the hydroxyl group at C15 of yanuthone E to form yanuthone D. Furthermore, several branching points in the pathway lead to the production of yanuthones F and G from 7-deacetoxyyanuthone A; yanuthones H and I from 22-deacetylyanuthone A; and yanuthone J from yanuthone E. The chain is FAD-dependent monooxygenase yanF from Aspergillus niger (strain ATCC 1015 / CBS 113.46 / FGSC A1144 / LSHB Ac4 / NCTC 3858a / NRRL 328 / USDA 3528.7).